The primary structure comprises 130 residues: DNA-binding protein HU (130 aa).

The protein belongs to the bacterial histone-like protein family.

Its function is as follows. Histone-like DNA-binding protein which is capable of wrapping DNA to stabilize it, and thus to prevent its denaturation under extreme environmental conditions. This Ureaplasma parvum serovar 3 (strain ATCC 700970) protein is DNA-binding protein HU (hup).